The chain runs to 357 residues: Alanine racemase (357 aa).

K34 acts as the Proton acceptor; specific for D-alanine in catalysis. Residue K34 is modified to N6-(pyridoxal phosphate)lysine. R127 is a binding site for substrate. The Proton acceptor; specific for L-alanine role is filled by Y252. Residue M301 coordinates substrate.

The protein belongs to the alanine racemase family. It depends on pyridoxal 5'-phosphate as a cofactor.

It catalyses the reaction L-alanine = D-alanine. It functions in the pathway amino-acid biosynthesis; D-alanine biosynthesis; D-alanine from L-alanine: step 1/1. Functionally, catalyzes the interconversion of L-alanine and D-alanine. May also act on other amino acids. The polypeptide is Alanine racemase (alr) (Dichelobacter nodosus (strain VCS1703A)).